Here is a 484-residue protein sequence, read N- to C-terminus: BAHD acyltransferase DCR (484 aa).

H168 serves as the catalytic Proton acceptor. The segment at 211 to 233 (LDLTAPKDPNETSNGEDAANPTV) is disordered. D394 acts as the Proton acceptor in catalysis. Positions 452–484 (EEEEDDGKKLTNGNGHVNGNGNGYVNGNGNGFV) are disordered. A compositionally biased stretch (gly residues) spans 467 to 484 (HVNGNGNGYVNGNGNGFV).

It belongs to the plant acyltransferase family. Expressed in root caps and lateral root emerging sites, in trichomes, in epidermis in stems, sepals and anther filaments, and in pollen grains and torpedo stage seeds.

Its subcellular location is the cytoplasm. It localises to the cytosol. In terms of biological role, required for incorporation of 9(10),16-dihydroxy-hexadecanoic acid into cutin. This Arabidopsis thaliana (Mouse-ear cress) protein is BAHD acyltransferase DCR (DCR).